The primary structure comprises 362 residues: Dihydroorotate dehydrogenase (quinone) (362 aa).

FMN contacts are provided by residues 62–66 (AGYDK) and threonine 86. A substrate-binding site is contributed by lysine 66. A substrate-binding site is contributed by 111 to 115 (NRLGF). Positions 139 and 170 each coordinate FMN. Asparagine 170 contributes to the substrate binding site. Serine 173 functions as the Nucleophile in the catalytic mechanism. Residue asparagine 175 coordinates substrate. 2 residues coordinate FMN: lysine 215 and serine 243. 244–245 (NT) is a substrate binding site. FMN-binding positions include glycine 266, glycine 295, and 316-317 (YS).

Belongs to the dihydroorotate dehydrogenase family. Type 2 subfamily. In terms of assembly, monomer. The cofactor is FMN.

It is found in the cell membrane. It carries out the reaction (S)-dihydroorotate + a quinone = orotate + a quinol. Its pathway is pyrimidine metabolism; UMP biosynthesis via de novo pathway; orotate from (S)-dihydroorotate (quinone route): step 1/1. Functionally, catalyzes the conversion of dihydroorotate to orotate with quinone as electron acceptor. The sequence is that of Dihydroorotate dehydrogenase (quinone) from Rhizobium meliloti (strain 1021) (Ensifer meliloti).